The chain runs to 505 residues: ATP synthase subunit alpha, chloroplastic (505 aa).

Residue 170–177 coordinates ATP; it reads GDRQTGKT.

It belongs to the ATPase alpha/beta chains family. F-type ATPases have 2 components, CF(1) - the catalytic core - and CF(0) - the membrane proton channel. CF(1) has five subunits: alpha(3), beta(3), gamma(1), delta(1), epsilon(1). CF(0) has four main subunits: a, b, b' and c.

It localises to the plastid. It is found in the chloroplast thylakoid membrane. The catalysed reaction is ATP + H2O + 4 H(+)(in) = ADP + phosphate + 5 H(+)(out). Produces ATP from ADP in the presence of a proton gradient across the membrane. The alpha chain is a regulatory subunit. The protein is ATP synthase subunit alpha, chloroplastic of Carica papaya (Papaya).